The sequence spans 85 residues: Elongation factor 1-beta (85 aa).

Belongs to the EF-1-beta/EF-1-delta family.

Functionally, promotes the exchange of GDP for GTP in EF-1-alpha/GDP, thus allowing the regeneration of EF-1-alpha/GTP that could then be used to form the ternary complex EF-1-alpha/GTP/AAtRNA. The chain is Elongation factor 1-beta from Methanoregula boonei (strain DSM 21154 / JCM 14090 / 6A8).